The primary structure comprises 374 residues: Guanine nucleotide-binding protein subunit alpha-15 (374 aa).

Positions glycine 41–leucine 374 constitute a G-alpha domain. A G1 motif region spans residues lysine 44–threonine 57. Residues glycine 49–serine 56, leucine 183–threonine 189, aspartate 208–glutamine 212, asparagine 277–aspartate 280, and alanine 346 contribute to the GTP site. Serine 56 is a Mg(2+) binding site. The G2 motif stretch occupies residues aspartate 181–threonine 189. Arginine 186 carries the ADP-ribosylarginine; by cholera toxin modification. Residue threonine 189 participates in Mg(2+) binding. The tract at residues leucine 204–lysine 213 is G3 motif. The G4 motif stretch occupies residues isoleucine 273 to aspartate 280. Residues threonine 344–threonine 349 form a G5 motif region.

Belongs to the G-alpha family. G(q) subfamily. G proteins are composed of 3 units; alpha, beta and gamma. The alpha chain contains the guanine nucleotide binding site. Specifically expressed in hematopoietic cells. Expressed in epididymis (at protein level).

Guanine nucleotide-binding proteins (G proteins) are involved as modulators or transducers in various transmembrane signaling systems. This chain is Guanine nucleotide-binding protein subunit alpha-15 (GNA15), found in Homo sapiens (Human).